A 472-amino-acid chain; its full sequence is MDKKIQRFSCTTILVGKKASYDGSTMVARTEDSQNGDFTPKKMIVVKPEDQPRHYRSVQSSFEMDLPDNPMTYTSVPDALGKDGIWAEAGVNEANVAMSATETITTNSRVLGADPLVASGIGEEDMVTLVLPYIRSAREGVLRLGAILEDYGTYESNGVAFSDEHDIWWLETIGGHHWIARRVPDDAYVTNPNQFGIDHFEFNNPEDYLCSADLKDFIDTYHLDLTYSHEHFNPRYAFGSQRDKDRQYNTPRAWIMQKFLNPEIVQDPRSFALAWCQKPYRKITVEDVKYVLSSHYQDTGYDPYGSEGTPVSKKVFRPIGINRTSQTAILHIRPNKPQEIAAIQWMAYGSMPFNTMVPFFTQVKTIPDYFANTYENVFTDNFYWTNRLIAALADPHYNHHETDLDNYLEETMAKGHAMLHAVEVQLLAGETVDLEEENQKMSDYVQGETQTLLNKILFDASNLMTNRFSLSD.

Cysteine 10 is an active-site residue.

This sequence belongs to the peptidase C69 family.

It catalyses the reaction an L-aminoacyl-L-amino acid + H2O = 2 an L-alpha-amino acid. The protein is Probable dipeptidase A (pepDA) of Streptococcus pyogenes serotype M1.